The following is a 195-amino-acid chain: dTDP-4-dehydrorhamnose 3,5-epimerase (195 aa).

Substrate is bound by residues Arg-31, Glu-36, 54–56, and Arg-67; that span reads QDN. Catalysis depends on His-70, which acts as the Proton acceptor. 2 residues coordinate substrate: Lys-80 and His-127. Tyr-140 functions as the Proton donor in the catalytic mechanism. Asp-151 and Lys-176 together coordinate substrate.

The protein belongs to the dTDP-4-dehydrorhamnose 3,5-epimerase family. Homodimer.

The enzyme catalyses dTDP-4-dehydro-6-deoxy-alpha-D-glucose = dTDP-4-dehydro-beta-L-rhamnose. It functions in the pathway carbohydrate biosynthesis; dTDP-L-rhamnose biosynthesis. Catalyzes the epimerization of the C3' and C5'positions of dTDP-6-deoxy-D-xylo-4-hexulose, forming dTDP-6-deoxy-L-lyxo-4-hexulose. The polypeptide is dTDP-4-dehydrorhamnose 3,5-epimerase (Sinorhizobium fredii (strain NBRC 101917 / NGR234)).